The following is a 252-amino-acid chain: Enolase-phosphatase E1 (252 aa).

Residues Asp-14 and Glu-16 each coordinate Mg(2+). Substrate-binding positions include 142 to 143 (SS) and Lys-176. Asp-201 is a Mg(2+) binding site.

Belongs to the HAD-like hydrolase superfamily. MasA/MtnC family. In terms of assembly, monomer. Mg(2+) is required as a cofactor.

The protein resides in the cytoplasm. Its subcellular location is the nucleus. The catalysed reaction is 5-methylsulfanyl-2,3-dioxopentyl phosphate + H2O = 1,2-dihydroxy-5-(methylsulfanyl)pent-1-en-3-one + phosphate. The protein operates within amino-acid biosynthesis; L-methionine biosynthesis via salvage pathway; L-methionine from S-methyl-5-thio-alpha-D-ribose 1-phosphate: step 3/6. Its pathway is amino-acid biosynthesis; L-methionine biosynthesis via salvage pathway; L-methionine from S-methyl-5-thio-alpha-D-ribose 1-phosphate: step 4/6. Bifunctional enzyme that catalyzes the enolization of 2,3-diketo-5-methylthiopentyl-1-phosphate (DK-MTP-1-P) into the intermediate 2-hydroxy-3-keto-5-methylthiopentenyl-1-phosphate (HK-MTPenyl-1-P), which is then dephosphorylated to form the acireductone 1,2-dihydroxy-3-keto-5-methylthiopentene (DHK-MTPene). The chain is Enolase-phosphatase E1 from Drosophila ananassae (Fruit fly).